The primary structure comprises 278 residues: Inosose isomerase (278 aa).

4 residues coordinate a divalent metal cation: Glu-142, Asp-174, His-200, and Glu-246.

It belongs to the IolI family. The cofactor is Mn(2+). Fe(2+) serves as cofactor. It depends on Co(2+) as a cofactor.

The catalysed reaction is scyllo-inosose = scyllo-inosine. The protein operates within polyol metabolism; myo-inositol degradation into acetyl-CoA. Involved in the reversible interconverion of 2-keto-myo-inositol (2KMI, inosose or 2,4,6/3,5-pentahydroxycyclohexanone) to 1-keto-D-chiro-inositol (1KDCI or 2,3,5/4,6-pentahydroxycyclohexanone). This Bacillus subtilis (strain 168) protein is Inosose isomerase (iolI).